A 120-amino-acid polypeptide reads, in one-letter code: uncharacterized protein (120 aa).

The tract at residues 80–99 (PTRKLQTPLNEPPRTWRKTA) is disordered.

This is an uncharacterized protein from Goose circovirus (GoCV).